A 276-amino-acid polypeptide reads, in one-letter code: SKA complex subunit 1 homolog (276 aa).

Positions 48-78 (VDVSLTAMEAQLQAVRRRLQEEREAFPKAKK) form a coiled coil.

Belongs to the SKA1 family.

This is SKA complex subunit 1 homolog from Oryza sativa subsp. indica (Rice).